Here is a 281-residue protein sequence, read N- to C-terminus: NADPH-dependent 7-cyano-7-deazaguanine reductase (281 aa).

87–89 serves as a coordination point for substrate; that stretch reads IES. 89 to 90 contacts NADPH; it reads SK. Catalysis depends on Cys188, which acts as the Thioimide intermediate. Catalysis depends on Asp195, which acts as the Proton donor. 227–228 contributes to the substrate binding site; that stretch reads HE. An NADPH-binding site is contributed by 256–257; sequence RG. Residues 261 to 281 form a disordered region; the sequence is INPYRSTEQAKPDHNHRMARQ. Residues 268 to 281 are compositionally biased toward basic and acidic residues; that stretch reads EQAKPDHNHRMARQ.

The protein belongs to the GTP cyclohydrolase I family. QueF type 2 subfamily. In terms of assembly, homodimer.

The protein resides in the cytoplasm. The catalysed reaction is 7-aminomethyl-7-carbaguanine + 2 NADP(+) = 7-cyano-7-deazaguanine + 2 NADPH + 3 H(+). Its pathway is tRNA modification; tRNA-queuosine biosynthesis. Catalyzes the NADPH-dependent reduction of 7-cyano-7-deazaguanine (preQ0) to 7-aminomethyl-7-deazaguanine (preQ1). This is NADPH-dependent 7-cyano-7-deazaguanine reductase from Vibrio vulnificus (strain CMCP6).